Consider the following 59-residue polypeptide: Large ribosomal subunit protein uL30 (59 aa).

It belongs to the universal ribosomal protein uL30 family. Part of the 50S ribosomal subunit.

This chain is Large ribosomal subunit protein uL30, found in Pelotomaculum thermopropionicum (strain DSM 13744 / JCM 10971 / SI).